The chain runs to 273 residues: Zinc finger protein 80 (273 aa).

2 consecutive C2H2-type zinc fingers follow at residues 49–71 (YKCK…QQIH) and 77–99 (YECQ…MRIH). The C2H2-type 3; atypical zinc-finger motif lies at 105-127 (CKCVECGKVFNRRSHLLCYRQIH). 4 consecutive C2H2-type zinc fingers follow at residues 133–155 (YECS…RVTH), 161–183 (FGCK…MKIH), 189–211 (CKCS…SMTH), and 217–239 (YECK…TRSH).

It belongs to the krueppel C2H2-type zinc-finger protein family.

The protein localises to the nucleus. Functionally, may be involved in transcriptional regulation. This Homo sapiens (Human) protein is Zinc finger protein 80 (ZNF80).